The following is a 179-amino-acid chain: Large ribosomal subunit protein uL5 (179 aa).

This sequence belongs to the universal ribosomal protein uL5 family. Part of the 50S ribosomal subunit; part of the 5S rRNA/L5/L18/L25 subcomplex. Contacts the 5S rRNA and the P site tRNA. Forms a bridge to the 30S subunit in the 70S ribosome.

In terms of biological role, this is one of the proteins that bind and probably mediate the attachment of the 5S RNA into the large ribosomal subunit, where it forms part of the central protuberance. In the 70S ribosome it contacts protein S13 of the 30S subunit (bridge B1b), connecting the 2 subunits; this bridge is implicated in subunit movement. Contacts the P site tRNA; the 5S rRNA and some of its associated proteins might help stabilize positioning of ribosome-bound tRNAs. This chain is Large ribosomal subunit protein uL5, found in Desulfotalea psychrophila (strain LSv54 / DSM 12343).